The primary structure comprises 492 residues: UPF0236 protein TTE0402 (492 aa).

The protein belongs to the UPF0236 family.

The sequence is that of UPF0236 protein TTE0402 from Caldanaerobacter subterraneus subsp. tengcongensis (strain DSM 15242 / JCM 11007 / NBRC 100824 / MB4) (Thermoanaerobacter tengcongensis).